A 143-amino-acid chain; its full sequence is Large ribosomal subunit protein uL16 (143 aa).

The segment at 1-26 (MSMALLPRRVKYRKSQRGSRKGNATR) is disordered. The segment covering 8–20 (RRVKYRKSQRGSR) has biased composition (basic residues).

This sequence belongs to the universal ribosomal protein uL16 family. Part of the 50S ribosomal subunit.

In terms of biological role, binds 23S rRNA and is also seen to make contacts with the A and possibly P site tRNAs. The polypeptide is Large ribosomal subunit protein uL16 (Methylacidiphilum infernorum (isolate V4) (Methylokorus infernorum (strain V4))).